A 221-amino-acid polypeptide reads, in one-letter code: Histone H1.3 (221 aa).

Positions 1–17 are enriched in low complexity; that stretch reads MSETAPLAPTIPAPAEK. A disordered region spans residues 1 to 43; it reads MSETAPLAPTIPAPAEKTPVKKKAKKAGATAGKRKASGPPVSE. N-acetylserine is present on S2. Phosphoserine is present on S2. K17 is modified (N6-acetyllysine). At T18 the chain carries Phosphothreonine. The span at 20-36 shows a compositional bias: basic residues; sequence VKKKAKKAGATAGKRKA. Residues K35, K47, and K53 each carry the N6-(beta-hydroxybutyryl)lysine modification. One can recognise an H15 domain in the interval 37 to 110; that stretch reads SGPPVSELIT…GASGSFKLNK (74 aa). A Citrulline modification is found at R55. N6-(beta-hydroxybutyryl)lysine occurs at positions 65, 76, 86, and 91. The interval 90 to 221 is disordered; that stretch reads SKGTLVQTKG…KAKKAAPKKK (132 aa). S105 carries the phosphoserine; by PKC modification. K107 bears the N6-(beta-hydroxybutyryl)lysine mark. Basic residues-rich tracts occupy residues 120–141, 150–161, and 170–179; these read KAKK…KPKK, KSIKKTPKKVKK, and KVAKSAKKVK. K170 is modified (N6-(beta-hydroxybutyryl)lysine). Residues 180–193 are compositionally biased toward low complexity; that stretch reads TPQPKKAAKSPAKA. Residues 194 to 221 are compositionally biased toward basic residues; sequence KAPKPKAAKPKSGKPKVTKAKKAAPKKK.

Belongs to the histone H1/H5 family. In terms of processing, H1 histones are progressively phosphorylated during the cell cycle, becoming maximally phosphorylated during late G2 phase and M phase, and being dephosphorylated sharply thereafter. Citrullination at Arg-55 (H1R54ci) by PADI4 takes place within the DNA-binding site of H1 and results in its displacement from chromatin and global chromatin decondensation, thereby promoting pluripotency and stem cell maintenance.

It is found in the nucleus. The protein localises to the chromosome. Its function is as follows. Histone H1 protein binds to linker DNA between nucleosomes forming the macromolecular structure known as the chromatin fiber. Histones H1 are necessary for the condensation of nucleosome chains into higher-order structured fibers. Also acts as a regulator of individual gene transcription through chromatin remodeling, nucleosome spacing and DNA methylation. This is Histone H1.3 from Homo sapiens (Human).